The following is a 264-amino-acid chain: MDNRPIGFLDSGVGGLTVARELMRQLPHEEIVYIGDSARAPYGPRPAEQIREYTWQLVNFLLTKNVKMIVFACNTATAVVWEEVKEKLDIPVLGVILPGASAAIKATQTGKVGVLGTAMTIQSDIYREKIQALSPETQVDSLACPKFAPLVESNSHQSSLAKKVVYETLRPLVGQVDTLVLGCTHYPLLRPIIQNAMGKDVKLIDSGAECARDISVLLNYFQINRSRTEKDIQHRFYTTASPAAFKEIAESWMGIDIHVEHVEL.

Residues 10 to 11 (DS) and 42 to 43 (YG) contribute to the substrate site. The Proton donor/acceptor role is filled by cysteine 73. 74–75 (NT) contacts substrate. Cysteine 183 acts as the Proton donor/acceptor in catalysis. Substrate is bound at residue 184-185 (TH).

The protein belongs to the aspartate/glutamate racemases family.

The enzyme catalyses L-glutamate = D-glutamate. The protein operates within cell wall biogenesis; peptidoglycan biosynthesis. Provides the (R)-glutamate required for cell wall biosynthesis. The protein is Glutamate racemase of Streptococcus suis (strain 98HAH33).